Reading from the N-terminus, the 178-residue chain is uncharacterized protein (178 aa).

The protein belongs to the mimivirus L114/R131 family.

This is an uncharacterized protein from Acanthamoeba polyphaga mimivirus (APMV).